The following is a 589-amino-acid chain: Oligo-1,6-glucosidase IMA3 (589 aa).

Asp215 acts as the Nucleophile in catalysis. The active-site Proton donor is the Glu277.

The protein belongs to the glycosyl hydrolase 13 family.

Its subcellular location is the cytoplasm. The enzyme catalyses Hydrolysis of (1-&gt;6)-alpha-D-glucosidic linkages in some oligosaccharides produced from starch and glycogen by alpha-amylase, and in isomaltose.. Functionally, alpha-glucosidase with broad substrate specificity for alpha-1,4- and alpha-1,6-glucosides. Not required for isomaltose utilization, but overexpression allows the IMA1 null mutant to grow on isomaltose. This Saccharomyces cerevisiae (strain ATCC 204508 / S288c) (Baker's yeast) protein is Oligo-1,6-glucosidase IMA3 (IMA3).